The primary structure comprises 240 residues: Ubiquitin domain-containing protein 2 (240 aa).

The disordered stretch occupies residues 1–48 (MGGCVGSHHDSSGSLNENSDGTGVALGRNQPLKREKPKWKSDYPMTDG). Polar residues predominate over residues 12–21 (SGSLNENSDG). Over residues 32–41 (LKREKPKWKS) the composition is skewed to basic and acidic residues. The 76-residue stretch at 152-227 (CQLRLRLSTG…VQVIVSQPPT (76 aa)) folds into the Ubiquitin-like domain.

It localises to the cytoplasm. This Danio rerio (Zebrafish) protein is Ubiquitin domain-containing protein 2 (ubtd2).